The sequence spans 152 residues: Small ribosomal subunit protein uS15 (152 aa).

The span at Met-1–Lys-11 shows a compositional bias: basic residues. Residues Met-1–Pro-22 form a disordered region.

It belongs to the universal ribosomal protein uS15 family. Part of the 30S ribosomal subunit.

This Methanosarcina barkeri (strain Fusaro / DSM 804) protein is Small ribosomal subunit protein uS15.